The following is a 482-amino-acid chain: Uric acid transporter UacT (482 aa).

The Cytoplasmic portion of the chain corresponds to 1 to 29 (MSAIDSQLPSSSGQDRPTDEVDRILSPGK). A helical transmembrane segment spans residues 30–50 (LIILGLQHVLVMYAGAVAVPL). Over 51–62 (MIGDRLGLSKEA) the chain is Periplasmic. A helical membrane pass occupies residues 63–83 (IAMLISSDLFCCGIVTLLQCI). The Cytoplasmic portion of the chain corresponds to 84–92 (GIGRFMGIR). A helical transmembrane segment spans residues 93 to 113 (LPVIMSVTFAAVTPMIAIGMN). At 114-115 (PD) the chain is on the periplasmic side. Residues 116–136 (IGLLGIFGATIAAGFITTLLA) form a helical membrane-spanning segment. Residues 137 to 142 (PLIGRL) are Cytoplasmic-facing. Residues 143-163 (MPLFPPLVTGVVITSIGLSII) form a helical membrane-spanning segment. The Periplasmic segment spans residues 164 to 178 (QVGIDWAAGGKGNPQ). A helical transmembrane segment spans residues 179–199 (YGNPVYLGISFAVLIFILLIT). Over 200–204 (RYAKG) the chain is Cytoplasmic. The chain crosses the membrane as a helical span at residues 205–225 (FMSNVAVLLGIVFGFLLSWMM). Residues 226 to 261 (NEVNLSGLHDASWFAIVTPMSFGMPIFDPVSILTMT) are Periplasmic-facing. Residues 262–282 (AVLIIVFIESMGMFLALGEIV) form a helical membrane-spanning segment. The Cytoplasmic portion of the chain corresponds to 283-337 (GRKLSSHDIIRGLRVDGVGTMIGGTFNSFPHTSFSQNVGLVSVTRVHSRWVCISS). Residues 338 to 358 (GIILILFGMVPKMAVLVASIP) form a helical membrane-spanning segment. Residue glutamine 359 is a topological domain, periplasmic. A helical membrane pass occupies residues 360–380 (FVLGGAGLVMFGMVLATGIRI). The Cytoplasmic segment spans residues 381–392 (LSRCNYTTNRYN). A helical transmembrane segment spans residues 393–413 (LYIVAISLGVGMTPTLSHDFF). Residues 414 to 421 (SKLPAVLQ) are Periplasmic-facing. A helical transmembrane segment spans residues 422-442 (PLLHSGIMLATLSAVVLNVFF). Residues 443 to 482 (NGYQHHADLVKESVSDKDLKVRTVRMWLLMRKLKKNEHGE) are Cytoplasmic-facing.

The protein belongs to the nucleobase:cation symporter-2 (NCS2) (TC 2.A.40) family.

The protein resides in the cell inner membrane. With respect to regulation, inhibited in the presence of the protonophore carbonyl cyanide m-chlorophenyl hydrazone. Functionally, proton-dependent high-capacity transporter for uric acid. Also shows a low capacity for transport of xanthine at 37 degrees Celsius but not at 25 degrees Celsius. This chain is Uric acid transporter UacT (uacT), found in Escherichia coli (strain K12).